We begin with the raw amino-acid sequence, 354 residues long: Probable L-ascorbate-6-phosphate lactonase UlaG (354 aa).

This sequence belongs to the UlaG family. It depends on a divalent metal cation as a cofactor.

The protein localises to the cytoplasm. It carries out the reaction L-ascorbate 6-phosphate + H2O = 3-dehydro-L-gulonate 6-phosphate. Its pathway is cofactor degradation; L-ascorbate degradation; D-xylulose 5-phosphate from L-ascorbate: step 1/4. In terms of biological role, probably catalyzes the hydrolysis of L-ascorbate-6-P into 3-keto-L-gulonate-6-P. Is essential for L-ascorbate utilization under anaerobic conditions. This is Probable L-ascorbate-6-phosphate lactonase UlaG from Escherichia coli O45:K1 (strain S88 / ExPEC).